The primary structure comprises 115 residues: Nucleoid-associated protein LA_4332 (115 aa).

It belongs to the YbaB/EbfC family. Homodimer.

The protein localises to the cytoplasm. The protein resides in the nucleoid. Its function is as follows. Binds to DNA and alters its conformation. May be involved in regulation of gene expression, nucleoid organization and DNA protection. The polypeptide is Nucleoid-associated protein LA_4332 (Leptospira interrogans serogroup Icterohaemorrhagiae serovar Lai (strain 56601)).